Reading from the N-terminus, the 952-residue chain is Ubiquitin carboxyl-terminal hydrolase 15 (952 aa).

Alanine 2 is subject to N-acetylalanine. The tract at residues 2–223 is mediates interaction with SART3; sequence AEGGAADLDT…KNEDGTWPRG (222 aa). In terms of domain architecture, DUSP spans 7–118; the sequence is ADLDTQRSDI…GQEPIARKVV (112 aa). Positions 260–904 constitute a USP domain; that stretch reads CGLSNLGNTC…AAYVLFYQRQ (645 aa). Residue cysteine 269 is the Nucleophile of the active site. The residue at position 573 (threonine 573) is a Phosphothreonine. The disordered stretch occupies residues 597–665; the sequence is ETDGPLRCCE…GGDNDSENGL (69 aa). The segment covering 627-644 has biased composition (acidic residues); that stretch reads METDEPDDESSQDQELPS. The active-site Proton acceptor is the histidine 862. The segment at 923–952 is disordered; the sequence is SAATGVPLESDEDSNDNDNDLENENCMHTN. Over residues 931–945 the composition is skewed to acidic residues; the sequence is ESDEDSNDNDNDLEN. Phosphoserine is present on residues serine 932 and serine 936.

Belongs to the peptidase C19 family. A homodimer structure has been reported; however it is unclear whether the protein form a homodimer in vivo. Identified in a complex with the COP9 signalosome complex (CSN). Interacts with SMAD1, SMAD2 and SMAD3; the interaction is direct. Forms a complex with SMURF2 and SMAD7. Interacts with TGFBR1. Interacts with SART3; the interaction is direct. May interact with RNF20 and RNF40. May interact with PRKN. Interacts with INCA1. In terms of processing, phosphorylated. Phosphorylation protects against ubiquitination and subsequent degradation by the proteasome. Post-translationally, ubiquitinated, leading to degradation by the proteasome. In terms of tissue distribution, highly expressed in testis and spleen, and at lower level in other tissues.

The protein resides in the cytoplasm. Its subcellular location is the nucleus. It is found in the mitochondrion. The catalysed reaction is Thiol-dependent hydrolysis of ester, thioester, amide, peptide and isopeptide bonds formed by the C-terminal Gly of ubiquitin (a 76-residue protein attached to proteins as an intracellular targeting signal).. Its function is as follows. Hydrolase that removes conjugated ubiquitin from target proteins and regulates various pathways such as the TGF-beta receptor signaling, NF-kappa-B and RNF41/NRDP1-PRKN pathways. Acts as a key regulator of TGF-beta receptor signaling pathway, but the precise mechanism is still unclear: according to a report, acts by promoting deubiquitination of monoubiquitinated R-SMADs (SMAD1, SMAD2 and/or SMAD3), thereby alleviating inhibition of R-SMADs and promoting activation of TGF-beta target genes. According to another reports, regulates the TGF-beta receptor signaling pathway by mediating deubiquitination and stabilization of TGFBR1, leading to an enhanced TGF-beta signal. Able to mediate deubiquitination of monoubiquitinated substrates, 'Lys-27'-, 'Lys-48'- and 'Lys-63'-linked polyubiquitin chains. May also regulate gene expression and/or DNA repair through the deubiquitination of histone H2B. Acts as an inhibitor of mitophagy by counteracting the action of parkin (PRKN): hydrolyzes cleavage of 'Lys-48'- and 'Lys-63'-linked polyubiquitin chains attached by parkin on target proteins such as MFN2, thereby reducing parkin's ability to drive mitophagy. Acts as an associated component of COP9 signalosome complex (CSN) and regulates different pathways via this association: regulates NF-kappa-B by mediating deubiquitination of NFKBIA and deubiquitinates substrates bound to VCP. Involved in endosome organization by mediating deubiquitination of SQSTM1: ubiquitinated SQSTM1 forms a molecular bridge that restrains cognate vesicles in the perinuclear region and its deubiquitination releases target vesicles for fast transport into the cell periphery. Acts as a negative regulator of antifungal immunity by mediating 'Lys-27'-linked deubiquitination of CARD9, thereby inactivating CARD9. This is Ubiquitin carboxyl-terminal hydrolase 15 (Usp15) from Rattus norvegicus (Rat).